The primary structure comprises 196 residues: dITP/XTP pyrophosphatase (196 aa).

7–12 (TGNAGK) lines the substrate pocket. Positions 39 and 68 each coordinate Mg(2+). Residue Asp-68 is the Proton acceptor of the active site. Substrate-binding positions include Ser-69, 153–156 (HGYD), Lys-176, and 181–182 (HR).

This sequence belongs to the HAM1 NTPase family. Homodimer. Mg(2+) serves as cofactor.

It catalyses the reaction XTP + H2O = XMP + diphosphate + H(+). It carries out the reaction dITP + H2O = dIMP + diphosphate + H(+). The catalysed reaction is ITP + H2O = IMP + diphosphate + H(+). Pyrophosphatase that catalyzes the hydrolysis of nucleoside triphosphates to their monophosphate derivatives, with a high preference for the non-canonical purine nucleotides XTP (xanthosine triphosphate), dITP (deoxyinosine triphosphate) and ITP. Seems to function as a house-cleaning enzyme that removes non-canonical purine nucleotides from the nucleotide pool, thus preventing their incorporation into DNA/RNA and avoiding chromosomal lesions. The chain is dITP/XTP pyrophosphatase from Thioalkalivibrio sulfidiphilus (strain HL-EbGR7).